Consider the following 108-residue polypeptide: Nucleoid-associated protein PSPTO_3645 (108 aa).

Residues Gln85–Ala96 show a composition bias toward polar residues. The interval Gln85 to Phe108 is disordered.

Belongs to the YbaB/EbfC family. Homodimer.

It is found in the cytoplasm. The protein resides in the nucleoid. Functionally, binds to DNA and alters its conformation. May be involved in regulation of gene expression, nucleoid organization and DNA protection. The protein is Nucleoid-associated protein PSPTO_3645 of Pseudomonas syringae pv. tomato (strain ATCC BAA-871 / DC3000).